The following is a 404-amino-acid chain: Phosphopentomutase (404 aa).

Mn(2+)-binding residues include aspartate 10, aspartate 303, histidine 308, aspartate 344, histidine 345, and histidine 356.

It belongs to the phosphopentomutase family. Mn(2+) serves as cofactor.

The protein resides in the cytoplasm. It catalyses the reaction 2-deoxy-alpha-D-ribose 1-phosphate = 2-deoxy-D-ribose 5-phosphate. It carries out the reaction alpha-D-ribose 1-phosphate = D-ribose 5-phosphate. It functions in the pathway carbohydrate degradation; 2-deoxy-D-ribose 1-phosphate degradation; D-glyceraldehyde 3-phosphate and acetaldehyde from 2-deoxy-alpha-D-ribose 1-phosphate: step 1/2. Its function is as follows. Isomerase that catalyzes the conversion of deoxy-ribose 1-phosphate (dRib-1-P) and ribose 1-phosphate (Rib-1-P) to deoxy-ribose 5-phosphate (dRib-5-P) and ribose 5-phosphate (Rib-5-P), respectively. The sequence is that of Phosphopentomutase from Shewanella sp. (strain MR-4).